The following is a 253-amino-acid chain: Adenosylcobinamide-GDP ribazoletransferase (253 aa).

A run of 4 helical transmembrane segments spans residues 33 to 53 (ISPLIIGISLALIESAVYVLL), 106 to 126 (IGSGGIGLLLVYLSIQIVALL), 132 to 152 (FYTIFHLISSNVLSMTIGLYI), and 178 to 198 (VLLLELIPFISLYNIIVFLVF).

The protein belongs to the CobS family. The cofactor is Mg(2+).

Its subcellular location is the cell membrane. It carries out the reaction alpha-ribazole + adenosylcob(III)inamide-GDP = adenosylcob(III)alamin + GMP + H(+). The catalysed reaction is alpha-ribazole 5'-phosphate + adenosylcob(III)inamide-GDP = adenosylcob(III)alamin 5'-phosphate + GMP + H(+). Its pathway is cofactor biosynthesis; adenosylcobalamin biosynthesis; adenosylcobalamin from cob(II)yrinate a,c-diamide: step 7/7. Its function is as follows. Joins adenosylcobinamide-GDP and alpha-ribazole to generate adenosylcobalamin (Ado-cobalamin). Also synthesizes adenosylcobalamin 5'-phosphate from adenosylcobinamide-GDP and alpha-ribazole 5'-phosphate. The sequence is that of Adenosylcobinamide-GDP ribazoletransferase from Saccharolobus islandicus (strain Y.G.57.14 / Yellowstone #1) (Sulfolobus islandicus).